Here is a 206-residue protein sequence, read N- to C-terminus: Putative 3-methyladenine DNA glycosylase (206 aa).

This sequence belongs to the DNA glycosylase MPG family.

The sequence is that of Putative 3-methyladenine DNA glycosylase from Salinibacter ruber (strain DSM 13855 / M31).